Reading from the N-terminus, the 232-residue chain is 7-cyano-7-deazaguanine synthase (232 aa).

8–18 (FSGGQDSTTCL) contributes to the ATP binding site. Zn(2+) contacts are provided by Cys189, Cys198, Cys201, and Cys204.

Belongs to the QueC family. It depends on Zn(2+) as a cofactor.

It carries out the reaction 7-carboxy-7-deazaguanine + NH4(+) + ATP = 7-cyano-7-deazaguanine + ADP + phosphate + H2O + H(+). It participates in purine metabolism; 7-cyano-7-deazaguanine biosynthesis. Catalyzes the ATP-dependent conversion of 7-carboxy-7-deazaguanine (CDG) to 7-cyano-7-deazaguanine (preQ(0)). The chain is 7-cyano-7-deazaguanine synthase from Photorhabdus laumondii subsp. laumondii (strain DSM 15139 / CIP 105565 / TT01) (Photorhabdus luminescens subsp. laumondii).